A 333-amino-acid chain; its full sequence is DNA-directed RNA polymerase subunit alpha (333 aa).

Positions 1–239 (MSAVLDKGSL…TQARCFLNIA (239 aa)) are alpha N-terminal domain (alpha-NTD). The segment at 259-333 (DASDLLSARI…SLGMNLDSHG (75 aa)) is alpha C-terminal domain (alpha-CTD).

It belongs to the RNA polymerase alpha chain family. As to quaternary structure, homodimer. The RNAP catalytic core consists of 2 alpha, 1 beta, 1 beta' and 1 omega subunit. When a sigma factor is associated with the core the holoenzyme is formed, which can initiate transcription.

The catalysed reaction is RNA(n) + a ribonucleoside 5'-triphosphate = RNA(n+1) + diphosphate. Its function is as follows. DNA-dependent RNA polymerase catalyzes the transcription of DNA into RNA using the four ribonucleoside triphosphates as substrates. This is DNA-directed RNA polymerase subunit alpha from Neorickettsia sennetsu (strain ATCC VR-367 / Miyayama) (Ehrlichia sennetsu).